The following is a 340-amino-acid chain: Glycerol-3-phosphate dehydrogenase [NAD(P)+] (340 aa).

Residues Trp11, Arg33, and Lys110 each contribute to the NADPH site. Sn-glycerol 3-phosphate-binding residues include Lys110, Gly144, and Ser146. Residue Ala148 participates in NADPH binding. Sn-glycerol 3-phosphate is bound by residues Lys199, Asp252, Ser262, Arg263, and Asn264. Catalysis depends on Lys199, which acts as the Proton acceptor. Arg263 is a binding site for NADPH. 2 residues coordinate NADPH: Val287 and Glu289.

This sequence belongs to the NAD-dependent glycerol-3-phosphate dehydrogenase family.

Its subcellular location is the cytoplasm. The catalysed reaction is sn-glycerol 3-phosphate + NAD(+) = dihydroxyacetone phosphate + NADH + H(+). It catalyses the reaction sn-glycerol 3-phosphate + NADP(+) = dihydroxyacetone phosphate + NADPH + H(+). The protein operates within membrane lipid metabolism; glycerophospholipid metabolism. In terms of biological role, catalyzes the reduction of the glycolytic intermediate dihydroxyacetone phosphate (DHAP) to sn-glycerol 3-phosphate (G3P), the key precursor for phospholipid synthesis. This is Glycerol-3-phosphate dehydrogenase [NAD(P)+] from Polynucleobacter necessarius subsp. necessarius (strain STIR1).